We begin with the raw amino-acid sequence, 629 residues long: tRNA uridine 5-carboxymethylaminomethyl modification enzyme MnmG (629 aa).

13–18 (GGGHAG) lines the FAD pocket. 273-287 (GPRYCPSIEDKIHRF) is an NAD(+) binding site.

This sequence belongs to the MnmG family. Homodimer. Heterotetramer of two MnmE and two MnmG subunits. It depends on FAD as a cofactor.

The protein localises to the cytoplasm. In terms of biological role, NAD-binding protein involved in the addition of a carboxymethylaminomethyl (cmnm) group at the wobble position (U34) of certain tRNAs, forming tRNA-cmnm(5)s(2)U34. This chain is tRNA uridine 5-carboxymethylaminomethyl modification enzyme MnmG, found in Shewanella baltica (strain OS223).